The sequence spans 118 residues: uncharacterized protein (118 aa).

Helical transmembrane passes span 20 to 39 (VEGP…LLWI), 46 to 63 (LVVV…GEAV), and 67 to 85 (LSLV…AMSG). The interval 85–118 (GDKSKKKGKKQRSILKDADDWDDDSWDDEGDWDE) is disordered. Residues 88–97 (SKKKGKKQRS) are compositionally biased toward basic residues. Positions 103 to 118 (DDWDDDSWDDEGDWDE) are enriched in acidic residues.

It is found in the cell membrane. This is an uncharacterized protein from Archaeoglobus fulgidus (strain ATCC 49558 / DSM 4304 / JCM 9628 / NBRC 100126 / VC-16).